Consider the following 504-residue polypeptide: MSKDNKKAGIEPKVFFPPLIIVGILCWLTVRDLDASNEVINAVFSYVTNVWGWAFEWYMVIMFGGWFWLVFGRYAKKRLGDEKPEFSTASWIFMMFASCTSAAVLFWGSIEIYYYISSPPFGMEGYSAPAKEIGLAYSLFHWGPLPWATYSFLSVAFAYFFFVRKMEVIRPSSTLTPLVGEKHVNGLFGTVVDNFYLVALILAMGTSLGLATPLVTECIQYLFGIPHTLQLDAIIISCWILLNAICVAFGLQKGVKIASDVRTYLSFLMLGWVFIVGGASFIVNYFTDSVGTLLMYMPRMLFYTDPIGKGGFPQAWTVFYWAWWVIYAIQMSIFLARISKGRTVRELCLGMVSGLTAGTWLIWTYSGGNTLQLIDQNILNIPQLIDQYGVPRAIIETWAALPLSTATMWGFFILCFIATVTLINACSYTLAMSTCRSMKEGAEPPLLVRIGWSVLVGIIGIILLALGGLKPIQTAIIAGGCPLFFVNIMVTLSFIKDAKVHWKD.

12 helical membrane-spanning segments follow: residues 8 to 28 (AGIEPKVFFPPLIIVGILCWL), 51 to 71 (WGWAFEWYMVIMFGGWFWLVF), 92 to 112 (IFMMFASCTSAAVLFWGSIEI), 143 to 163 (GPLPWATYSFLSVAFAYFFFV), 195 to 215 (FYLVALILAMGTSLGLATPLV), 231 to 251 (LDAIIISCWILLNAICVAFGL), 263 to 283 (TYLSFLMLGWVFIVGGASFIV), 315 to 335 (AWTVFYWAWWVIYAIQMSIFL), 347 to 367 (LCLGMVSGLTAGTWLIWTYSG), 403 to 423 (LSTATMWGFFILCFIATVTLI), 446 to 466 (LLVRIGWSVLVGIIGIILLAL), and 475 to 495 (AIIAGGCPLFFVNIMVTLSFI).

This sequence belongs to the BCCT transporter (TC 2.A.15) family. CaiT subfamily. Homotrimer.

It localises to the cell inner membrane. It carries out the reaction 4-(trimethylamino)butanoate(in) + (R)-carnitine(out) = 4-(trimethylamino)butanoate(out) + (R)-carnitine(in). It functions in the pathway amine and polyamine metabolism; carnitine metabolism. Functionally, catalyzes the exchange of L-carnitine for gamma-butyrobetaine. The chain is L-carnitine/gamma-butyrobetaine antiporter from Proteus sp. (strain LE138).